A 372-amino-acid polypeptide reads, in one-letter code: Actin-related protein 2/3 complex subunit 1B (372 aa).

WD repeat units follow at residues 6–45 (FLVE…WVQV), 50–89 (EHNG…WKPT), 94–135 (RINR…WVCK), 140–179 (PIRS…VEER), 242–280 (SETL…GKLS), and 324–367 (LHKN…SALK).

Belongs to the WD repeat ARPC1 family. As to quaternary structure, component of the Arp2/3 complex composed of ACTR2/ARP2, ACTR3/ARP3, ARPC1B/p41-ARC, ARPC2/p34-ARC, ARPC3/p21-ARC, ARPC4/p20-ARC and ARPC5/p16-ARC.

It is found in the cytoplasm. It localises to the cytoskeleton. Its subcellular location is the nucleus. Functionally, component of the Arp2/3 complex, a multiprotein complex that mediates actin polymerization upon stimulation by nucleation-promoting factor (NPF). The Arp2/3 complex mediates the formation of branched actin networks in the cytoplasm, providing the force for cell motility. In addition to its role in the cytoplasmic cytoskeleton, the Arp2/3 complex also promotes actin polymerization in the nucleus, thereby regulating gene transcription and repair of damaged DNA. The Arp2/3 complex promotes homologous recombination (HR) repair in response to DNA damage by promoting nuclear actin polymerization, leading to drive motility of double-strand breaks (DSBs). This is Actin-related protein 2/3 complex subunit 1B (ARPC1B) from Bos taurus (Bovine).